A 265-amino-acid polypeptide reads, in one-letter code: Undecaprenyl-diphosphatase (265 aa).

Helical transmembrane passes span 7-27 (IIVS…PISS), 45-65 (TKIL…YFFH), 86-106 (LHII…YKKI), 108-128 (LLFN…FLLI), 145-165 (ISLL…YPGF), 186-206 (IEFS…YDFI), 214-234 (ILDL…SILC), and 245-265 (TSLI…YFIN).

It belongs to the UppP family.

It is found in the cell membrane. It catalyses the reaction di-trans,octa-cis-undecaprenyl diphosphate + H2O = di-trans,octa-cis-undecaprenyl phosphate + phosphate + H(+). Functionally, catalyzes the dephosphorylation of undecaprenyl diphosphate (UPP). Confers resistance to bacitracin. The sequence is that of Undecaprenyl-diphosphatase from Buchnera aphidicola subsp. Acyrthosiphon pisum (strain Tuc7).